A 1021-amino-acid chain; its full sequence is MYEGKHIHFSEVDNKPLCSYSPKLCKQRRLNGYAFCIRHVLEDKTAPFKQCEYVAKYNSQRCTNPIPKSEDRRYCNSHLQVLGFIPKKERKKKTDPVDEVKARHQMDAMAFSLTVPTLALKMPNGLDSMSLSPPGARVPLHYLDTELEDPFAFNEEDDDLKKGVTVRKKLQSKLAQNRQRQRETEILKVRQEHFSTPPTPPQQHTHLSPLSTSLKPPAPPQGSVCKSPQPQNTSLPMQGVAPTTHSIAQIRQASHKRPLPLLPSSRAPISDAPRTDRILMKAAAFSPHLSCISRLQRLVKLCTQKRQLDADLFPHLGLDWSEESGEELEDADQASPYQVAWSIRETLRHERHTSDDDDMESRSSRVTQLCTYFQQKYKHLCRLERAESRQKKCRHTFRKALLQAASKEPECTGQLIQELRRAACSRASLRQTKLKEVEPAACSGTVKGEQCTKQALPFTRHCFQHILLNRSQQLFSSCTAKFADGQQCSVPVFDITHQTPLCEEHAKKMDNFLRGDNSRKVQHQQQRKPRKKTKPPALTKKHKKKRRRGPRRPQKPIPPAVPQGNLSMPTSVSLPVEASQMRSPSTPELSADELPDDIANEITDIPHDLELNQEDFADVLPRLPDDLQDFDFFEGKNGDLLPTTEEAEELERALQAVTSLECLSTIGVLSQSDGVPVQGLSDRGMGVFSTGTDASGIQSLSREVNTDLGELLNGRIVHDSFSSLELDENLLHSAPLSSPPTALAGQIQGQFSAPASAGLTSATLLSQSALGERAFPGQFHGLHDGSHASQRPHPAQLLSKADDLITSRQQYSSDHSHSSPHGSHYDSEHVPSPYSDHITSPHTSYSGDNMAATFSAEMPIMAQHLLPTQLEVPLGGVVNPRTHWGNLPVNLGDPSAFSNLLGADGHLLSTSLSTPPTTSNSETTQPAFATVTPSSSSVLPGLPQTSFSGMGPSAELMASTSPKQQLPQFSAAFGHQLSSHSGIPKDLQPSHSSIAPPTGFTATGATATSTNNASPPFPSPN.

Lys-87 participates in a covalent cross-link: Glycyl lysine isopeptide (Lys-Gly) (interchain with G-Cter in SUMO2). Ser-132 bears the Phosphoserine mark. 5 disordered regions span residues 194–239 (FSTP…PMQG), 514–570 (RGDN…SMPT), 808–844 (RQQYSSDHSHSSPHGSHYDSEHVPSPYSDHITSPHTS), 911–940 (SLSTPPTTSNSETTQPAFATVTPSSSSVLP), and 976–1021 (QLSS…PSPN). The span at 224-239 (VCKSPQPQNTSLPMQG) shows a compositional bias: polar residues. Residues 520-554 (KVQHQQQRKPRKKTKPPALTKKHKKKRRRGPRRPQ) are compositionally biased toward basic residues. Over residues 911–926 (SLSTPPTTSNSETTQP) the composition is skewed to low complexity. Positions 931–940 (VTPSSSSVLP) are enriched in polar residues. Positions 995-1014 (APPTGFTATGATATSTNNAS) are enriched in low complexity.

The protein belongs to the INO80D family. Component of the chromatin remodeling INO80 complex; specifically part of a complex module associated with the N-terminus of INO80.

It localises to the nucleus. In terms of biological role, putative regulatory component of the chromatin remodeling INO80 complex which is involved in transcriptional regulation, DNA replication and probably DNA repair. The chain is INO80 complex subunit D from Mus musculus (Mouse).